The primary structure comprises 86 residues: Anti-adapter protein IraP (86 aa).

Residues 1-42 (MKNLIAELLVKLAQKEEESKELVAQVEALEIVVTALLRQMAQ) adopt a coiled-coil conformation.

This sequence belongs to the IraP family. Interacts with RssB.

It localises to the cytoplasm. Its function is as follows. Inhibits RpoS proteolysis by regulating RssB activity, thereby increasing the stability of the sigma stress factor RpoS especially during phosphate starvation, but also in stationary phase and during nitrogen starvation. Its effect on RpoS stability is due to its interaction with RssB, which probably blocks the interaction of RssB with RpoS, and the consequent delivery of the RssB-RpoS complex to the ClpXP protein degradation pathway. In Enterobacter sp. (strain 638), this protein is Anti-adapter protein IraP.